The following is a 23-amino-acid chain: Basic phospholipase A2 mangshantoxin (23 aa).

Belongs to the phospholipase A2 family. Group II subfamily. The cofactor is Ca(2+). Contains 7 disulfide bonds. In terms of tissue distribution, expressed by the venom gland.

Its subcellular location is the secreted. The enzyme catalyses a 1,2-diacyl-sn-glycero-3-phosphocholine + H2O = a 1-acyl-sn-glycero-3-phosphocholine + a fatty acid + H(+). Snake venom phospholipase A2 (PLA2) that displays presynaptic neurotoxicity. PLA2 catalyzes the calcium-dependent hydrolysis of the 2-acyl groups in 3-sn-phosphoglycerides. This chain is Basic phospholipase A2 mangshantoxin, found in Protobothrops mangshanensis (Mangshan pitviper).